Reading from the N-terminus, the 223-residue chain is Endonuclease III (223 aa).

Residues 118–137 (RDFLTAIEGIGDKTADVVLL) enclose the HhH domain. [4Fe-4S] cluster is bound by residues C198, C205, C208, and C214.

The protein belongs to the Nth/MutY family. It depends on [4Fe-4S] cluster as a cofactor.

The catalysed reaction is 2'-deoxyribonucleotide-(2'-deoxyribose 5'-phosphate)-2'-deoxyribonucleotide-DNA = a 3'-end 2'-deoxyribonucleotide-(2,3-dehydro-2,3-deoxyribose 5'-phosphate)-DNA + a 5'-end 5'-phospho-2'-deoxyribonucleoside-DNA + H(+). Its function is as follows. Probably part of a 4-gene DNA damage response locus in which the upstream ups system, in combination with this downstream locus, functions in homologous recombination to rescue Sulfolobales from DNA-damaging threats. DNA repair enzyme that has both DNA N-glycosylase activity and AP-lyase activity. The DNA N-glycosylase activity releases various damaged pyrimidines from DNA by cleaving the N-glycosidic bond, leaving an AP (apurinic/apyrimidinic) site. The AP-lyase activity cleaves the phosphodiester bond 3' to the AP site by a beta-elimination, leaving a 3'-terminal unsaturated sugar and a product with a terminal 5'-phosphate. Nicks UV-treated plasmid DNA in a dose-dependent manner, has no activity on untreated DNA. The chain is Endonuclease III from Sulfolobus acidocaldarius (strain ATCC 33909 / DSM 639 / JCM 8929 / NBRC 15157 / NCIMB 11770).